Consider the following 183-residue polypeptide: Small ribosomal subunit protein uS4c (183 aa).

Positions 82 to 143 (MRLDNILFRL…KQRSKALIQN (62 aa)) constitute an S4 RNA-binding domain.

It belongs to the universal ribosomal protein uS4 family. As to quaternary structure, part of the 30S ribosomal subunit. Contacts protein S5. The interaction surface between S4 and S5 is involved in control of translational fidelity.

Its subcellular location is the plastid. It is found in the chloroplast. One of the primary rRNA binding proteins, it binds directly to 16S rRNA where it nucleates assembly of the body of the 30S subunit. In terms of biological role, with S5 and S12 plays an important role in translational accuracy. This Aristea capitata protein is Small ribosomal subunit protein uS4c (rps4).